A 695-amino-acid polypeptide reads, in one-letter code: MSGPHRTFSFEQRGDGEAHSSFMDHAMHPQYDDVSPISNMSSSPGHMNETHHGLASVPEDNHQGWGQARGPSPSNRTGFTATPEMDNLGPASVGGGISGIALGVANSHDRLSGVEARRGTDGQEANIPAERGYNTTGSDNPYIPAPPDMGGYGSSETLHPRQSYGSNVALGAAAGPAGQLTPGHSATHLGTSNSSQRNLYDAPYQSAGGLSAGPYQRHSAYSSNDLPLDINPEEIADDGDDGFAPAGNSRSSARRSQAVPAAAGGAAAGGVLGGIGGLFNNRNPAETSYDPVPGAGLEAGEKSQWVKPKPSTGSRKRGWIIGAILAVIIIGAIVGGAVGGTIGHKDSGDSASGSSASTQSASGDTDTNGDLDKNSAEIKALMNNKDLHKVFPGMDYTPWGVQYPLCLKYPPSQNNVTRDMAVLAQLTNNVRLYGTDCNQTEMVLHAIDKLDLKDMKVWLGVWIDTNETTSRRQIDQLYKIVDDAKDISIFNGAIVGNEALFRAGDNKITAQATLTKYMQEVRDHFKKHDIKMPIATSDLGDNWNAELVQIADVVMSNVHPFFGGIPVDQAAAWTWRFWQDHDVILTQGTDKRQVISEVGWPSGGGNDCGKGANCPDDTSGAVAGIDELNKFMEDWVCQALDNGTDYFWFEAFDEPWKIEFNTKNENWEDKWGLMDPARKLKSGLKIPDCGGKTAA.

Disordered stretches follow at residues 1–53 (MSGP…THHG), 117–140 (RRGT…GSDN), 175–258 (GPAG…RSQA), and 286–314 (ETSY…STGS). At 1 to 317 (MSGPHRTFSF…PKPSTGSRKR (317 aa)) the chain is on the cytoplasmic side. The segment covering 36–45 (PISNMSSSPG) has biased composition (polar residues). Polar residues predominate over residues 188–198 (HLGTSNSSQRN). The span at 231-241 (NPEEIADDGDD) shows a compositional bias: acidic residues. Residues 318–338 (GWIIGAILAVIIIGAIVGGAV) traverse the membrane as a helical; Signal-anchor for type II membrane protein segment. The Extracellular portion of the chain corresponds to 339–695 (GGTIGHKDSG…IPDCGGKTAA (357 aa)). The interval 346 to 372 (DSGDSASGSSASTQSASGDTDTNGDLD) is disordered. The segment covering 349 to 366 (DSASGSSASTQSASGDTD) has biased composition (low complexity). N-linked (GlcNAc...) asparagine glycosylation is found at Asn-415, Asn-438, and Asn-466. Glu-498 (proton donor) is an active-site residue. Catalysis depends on Glu-597, which acts as the Nucleophile. N-linked (GlcNAc...) asparagine glycosylation is present at Asn-642.

It belongs to the glycosyl hydrolase 17 family.

It localises to the cell membrane. It carries out the reaction Hydrolysis of (1-&gt;3)-beta-D-glucosidic linkages in (1-&gt;3)-beta-D-glucans.. In terms of biological role, glucanases play a role in cell expansion during growth, in cell-cell fusion during mating, and in spore release during sporulation. This enzyme may be involved in beta-glucan degradation. Active on laminarin and lichenan. The sequence is that of Probable glucan endo-1,3-beta-glucosidase btgC (btgC) from Aspergillus clavatus (strain ATCC 1007 / CBS 513.65 / DSM 816 / NCTC 3887 / NRRL 1 / QM 1276 / 107).